The following is a 262-amino-acid chain: Global transcriptional regulator CodY (262 aa).

The tract at residues 1-159 (MAHLLEKTRK…ASTVVGIQLL (159 aa)) is GAF domain. The segment at residues 207 to 226 (ASVIADRIGITRSVIVNALR) is a DNA-binding region (H-T-H motif).

This sequence belongs to the CodY family.

The protein resides in the cytoplasm. Its function is as follows. DNA-binding global transcriptional regulator which is involved in the adaptive response to starvation and acts by directly or indirectly controlling the expression of numerous genes in response to nutrient availability. During rapid exponential growth, CodY is highly active and represses genes whose products allow adaptation to nutrient depletion. This chain is Global transcriptional regulator CodY, found in Streptococcus pneumoniae (strain JJA).